Reading from the N-terminus, the 218-residue chain is OPA3-like protein (218 aa).

A coiled-coil region spans residues 129 to 179 (NEIMEKQFVLQKKKNELQSSTEEIDSTEKDFDELHKVILKVERELHTLRQN). The segment at 175-218 (TLRQNTPSQNEQAEATPSKEIPRETVSEKADHPPSSNTKSVSTG) is disordered. A compositionally biased stretch (polar residues) spans 176 to 189 (LRQNTPSQNEQAEA). The segment covering 194-206 (EIPRETVSEKADH) has biased composition (basic and acidic residues). The segment covering 208–218 (PSSNTKSVSTG) has biased composition (polar residues).

Belongs to the OPA3 family.

This Schizosaccharomyces pombe (strain 972 / ATCC 24843) (Fission yeast) protein is OPA3-like protein.